A 622-amino-acid chain; its full sequence is Chaperone protein HscA homolog (622 aa).

It belongs to the heat shock protein 70 family.

Chaperone involved in the maturation of iron-sulfur cluster-containing proteins. Has a low intrinsic ATPase activity which is markedly stimulated by HscB. The protein is Chaperone protein HscA homolog of Burkholderia ambifaria (strain MC40-6).